Consider the following 116-residue polypeptide: Large ribosomal subunit protein bL19 (116 aa).

Belongs to the bacterial ribosomal protein bL19 family.

In terms of biological role, this protein is located at the 30S-50S ribosomal subunit interface and may play a role in the structure and function of the aminoacyl-tRNA binding site. This chain is Large ribosomal subunit protein bL19, found in Staphylococcus aureus (strain Mu3 / ATCC 700698).